Reading from the N-terminus, the 97-residue chain is Putative septation protein SpoVG (97 aa).

The protein belongs to the SpoVG family.

Functionally, could be involved in septation. This chain is Putative septation protein SpoVG, found in Borreliella afzelii (strain PKo) (Borrelia afzelii).